Reading from the N-terminus, the 88-residue chain is Small ribosomal subunit protein uS15c (88 aa).

This sequence belongs to the universal ribosomal protein uS15 family. In terms of assembly, part of the 30S ribosomal subunit.

It is found in the plastid. The protein resides in the chloroplast. The protein is Small ribosomal subunit protein uS15c (rps15) of Marchantia polymorpha (Common liverwort).